We begin with the raw amino-acid sequence, 253 residues long: Probable transcriptional regulatory protein KRH_13670 (253 aa).

Belongs to the TACO1 family.

The protein resides in the cytoplasm. The chain is Probable transcriptional regulatory protein KRH_13670 from Kocuria rhizophila (strain ATCC 9341 / DSM 348 / NBRC 103217 / DC2201).